Reading from the N-terminus, the 70-residue chain is DNA-directed RNA polymerase subunit epsilon (70 aa).

This sequence belongs to the RNA polymerase subunit epsilon family. RNAP is composed of a core of 2 alpha, a beta and a beta' subunit. The core is associated with a delta subunit, and at least one of epsilon or omega. When a sigma factor is associated with the core the holoenzyme is formed, which can initiate transcription.

It catalyses the reaction RNA(n) + a ribonucleoside 5'-triphosphate = RNA(n+1) + diphosphate. A non-essential component of RNA polymerase (RNAP). This is DNA-directed RNA polymerase subunit epsilon from Latilactobacillus sakei subsp. sakei (strain 23K) (Lactobacillus sakei subsp. sakei).